The chain runs to 1464 residues: ABC transporter G family member 35 (1464 aa).

The segment at 1-26 (MDAAAEMQKVVSLRRGGGGSSSRGAA) is disordered. An ABC transporter 1 domain is found at 173 to 446 (ANALGILPNK…FELMGFKCPE (274 aa)). Residue 206 to 213 (GPPGSGKT) participates in ATP binding. In terms of domain architecture, ABC transmembrane type-2 1 spans 524 to 737 (ELLKANIDRE…AQNAISVNEF (214 aa)). Transmembrane regions (helical) follow at residues 542-562 (FVYIFRACQLMVVSAIAMTVF), 575-595 (GVIFMGALFFSVMMIMFNGLS), 630-650 (IPMSFIEVGGFVFMSYYVIGF), 662-682 (LLMLAINQMAAALFRFVGGAA), 686-706 (IVANVFGSFMLLIFMVLGGFI), 715-735 (WWIWGYWISPMMYAQNAISVN), and 774-794 (IGFGALLGFIMLFNGLFTLAL). One can recognise an ABC transporter 2 domain in the interval 867 to 1119 (LTFDNIKYSV…ELIKYFEGIK (253 aa)). 912 to 919 (GVSGAGKT) is a binding site for ATP. Positions 1192–1406 (NQCLACLWKM…TLYGLVASQF (215 aa)) constitute an ABC transmembrane type-2 2 domain. The next 7 membrane-spanning stretches (helical) occupy residues 1213 to 1233 (AIRLFFTTVIALLFGTIFWDL), 1243 to 1263 (LFNAMGSMYSAVLFIGVLNSQ), 1299 to 1319 (FPYTLVQSIIYGIIVYSMIGF), 1326 to 1346 (FFWYLFFMFFTFLYFTFYGMM), 1356 to 1376 (VASIVSSAFYGIWNLFSGFII), 1387 to 1407 (WYCWICPVAWTLYGLVASQFG), and 1436 to 1456 (VVAVVIVAFTMLFAFLFGFAI).

It belongs to the ABC transporter superfamily. ABCG family. PDR (TC 3.A.1.205) subfamily.

The protein localises to the membrane. In terms of biological role, may be a general defense protein. This is ABC transporter G family member 35 from Oryza sativa subsp. japonica (Rice).